Reading from the N-terminus, the 331-residue chain is Putative sigma L-dependent transcriptional regulator YplP (331 aa).

Residues histidine 12–alanine 213 enclose the Sigma-54 factor interaction domain. Alanine 95 to aspartate 104 serves as a coordination point for ATP.

Functionally, may play a role in cold adaptation. This Bacillus subtilis (strain 168) protein is Putative sigma L-dependent transcriptional regulator YplP (yplP).